A 92-amino-acid polypeptide reads, in one-letter code: Small ribosomal subunit protein uS19c (92 aa).

A disordered region spans residues 73-92 (EFSPTRTYRGHAKKDKKAKR). Basic residues predominate over residues 80 to 92 (YRGHAKKDKKAKR).

Belongs to the universal ribosomal protein uS19 family.

The protein localises to the plastid. It is found in the chloroplast. Protein S19 forms a complex with S13 that binds strongly to the 16S ribosomal RNA. The protein is Small ribosomal subunit protein uS19c (rps19) of Chlamydomonas reinhardtii (Chlamydomonas smithii).